Reading from the N-terminus, the 217-residue chain is Ras-related protein RIC2 (217 aa).

GTP contacts are provided by residues 21–28 (GDSGVGKS), 69–73 (DTAGQ), and 127–130 (NKSD). 2 S-geranylgeranyl cysteine lipidation sites follow: Cys-214 and Cys-215.

It belongs to the small GTPase superfamily. Rab family.

The protein resides in the cell membrane. In terms of biological role, possesses GTPase activity. The chain is Ras-related protein RIC2 (RIC2) from Oryza sativa subsp. japonica (Rice).